The following is a 730-amino-acid chain: Catalase R (730 aa).

His-105 is a catalytic residue. Residue Tyr-392 participates in heme binding. Positions 403-433 are disordered; sequence PNFEQIPVNRPRKPVHNNNRDGFGQQQIPTN.

It belongs to the catalase family. Heme serves as cofactor.

It catalyses the reaction 2 H2O2 = O2 + 2 H2O. Functionally, occurs in almost all aerobically respiring organisms and serves to protect cells from the toxic effects of hydrogen peroxide. The protein is Catalase R (catR) of Aspergillus niger.